Here is a 246-residue protein sequence, read N- to C-terminus: 14-3-3 protein beta/alpha (246 aa).

Position 1 is an N-acetylmethionine (M1). An N-acetylthreonine; in 14-3-3 protein beta/alpha, N-terminally processed modification is found at T2. T2 is modified (phosphothreonine). K5 carries the post-translational modification N6-acetyllysine. An N6-acetyllysine; alternate modification is found at K51. Residue K51 forms a Glycyl lysine isopeptide (Lys-Gly) (interchain with G-Cter in SUMO2); alternate linkage. Position 60 is a phosphoserine (S60). Residue K70 is modified to N6-acetyllysine. Residues Y84 and Y106 each carry the 3'-nitrotyrosine modification. K117 carries the N6-acetyllysine modification. Residues S186 and S232 each carry the phosphoserine modification.

The protein belongs to the 14-3-3 family. As to quaternary structure, homodimer. Interacts with SAMSN1 and PRKCE. Interacts with AKAP13. Interacts with SSH1 and TORC2/CRTC2. Interacts with ABL1; the interaction results in cytoplasmic location of ABL1 and inhibition of cABL-mediated apoptosis. Interacts with ROR2 (dimer); the interaction results in phosphorylation of YWHAB on tyrosine residues. Interacts with GAB2. Interacts with YAP1 (phosphorylated form). Interacts with the phosphorylated (by AKT1) form of SRPK2. Interacts with PKA-phosphorylated AANAT. Interacts with MYO1C. Interacts with SIRT2. Interacts with the 'Thr-369' phosphorylated form of DAPK2. Interacts with PI4KB, TBC1D22A and TBC1D22B. Interacts with the 'Ser-1134' and 'Ser-1161' phosphorylated form of SOS1. Interacts (via phosphorylated form) with YWHAB; this interaction occurs in a protein kinase AKT1-dependent manner. Interacts with SLITRK1. Interacts with SYNPO2 (phosphorylated form); YWHAB competes with ACTN2 for interaction with SYNPO2. Interacts with RIPOR2 (via phosphorylated form); this interaction occurs in a chemokine-dependent manner and does not compete for binding of RIPOR2 with RHOA nor blocks inhibition of RIPOR2-mediated RHOA activity. Interacts with MARK2 and MARK3. Interacts with TESK1; the interaction is dependent on the phosphorylation of TESK1 'Ser-439' and inhibits TESK1 kinase activity. Interacts with MEFV. Interacts with HDAC4. Interacts with ADAM22 (via C-terminus). Post-translationally, the alpha, brain-specific form differs from the beta form in being phosphorylated. Phosphorylated on Ser-60 by protein kinase C delta type catalytic subunit in a sphingosine-dependent fashion.

The protein localises to the cytoplasm. Its subcellular location is the melanosome. Its function is as follows. Adapter protein implicated in the regulation of a large spectrum of both general and specialized signaling pathways. Binds to a large number of partners, usually by recognition of a phosphoserine or phosphothreonine motif. Binding generally results in the modulation of the activity of the binding partner. Negative regulator of osteogenesis. Blocks the nuclear translocation of the phosphorylated form (by AKT1) of SRPK2 and antagonizes its stimulatory effect on cyclin D1 expression resulting in blockage of neuronal apoptosis elicited by SRPK2. Negative regulator of signaling cascades that mediate activation of MAP kinases via AKAP13. In Bos taurus (Bovine), this protein is 14-3-3 protein beta/alpha (YWHAB).